Reading from the N-terminus, the 831-residue chain is Isethionate sulfite-lyase (831 aa).

The region spanning 32–701 is the PFL domain; it reads PRVFRLLERF…VVSATPNGRT (670 aa). Residues arginine 189, glutamine 193, 468-470, and arginine 679 contribute to the 2-hydroxyethane-1-sulfonate site; that span reads CTE. The Cysteine radical intermediate role is filled by cysteine 468. Catalysis depends on glutamate 470, which acts as the Proton acceptor. A Glycine radical domain is found at 708 to 831; it reads DGSSASHGAD…LIARTEHDVM (124 aa). Glycine 806 is subject to Glycine radical.

The protein belongs to the glycyl radical enzyme (GRE) family. As to quaternary structure, homodimer. Post-translationally, requires the activating protein IslB to generate the key active site glycyl radical on Gly-806 that is involved in catalysis.

The enzyme catalyses 2-hydroxyethane-1-sulfonate = acetaldehyde + sulfite + H(+). It functions in the pathway organosulfur degradation; alkanesulfonate degradation. Its function is as follows. Involved in an anaerobic respiration pathway that converts the sulfonate isethionate (2-hydroxyethanesulfonate) to ammonia, acetate and sulfide. Catalyzes the radical-mediated C-S bond cleavage of isethionate (2-hydroxyethanesulfonate) to form sulfite and acetaldehyde. This Desulfovibrio desulfuricans (strain ATCC 27774 / DSM 6949 / MB) protein is Isethionate sulfite-lyase.